Reading from the N-terminus, the 309-residue chain is UDP-3-O-acyl-N-acetylglucosamine deacetylase (309 aa).

Zn(2+)-binding residues include His78, His237, and Asp241. His264 (proton donor) is an active-site residue.

The protein belongs to the LpxC family. The cofactor is Zn(2+).

It catalyses the reaction a UDP-3-O-[(3R)-3-hydroxyacyl]-N-acetyl-alpha-D-glucosamine + H2O = a UDP-3-O-[(3R)-3-hydroxyacyl]-alpha-D-glucosamine + acetate. Its pathway is glycolipid biosynthesis; lipid IV(A) biosynthesis; lipid IV(A) from (3R)-3-hydroxytetradecanoyl-[acyl-carrier-protein] and UDP-N-acetyl-alpha-D-glucosamine: step 2/6. Its function is as follows. Catalyzes the hydrolysis of UDP-3-O-myristoyl-N-acetylglucosamine to form UDP-3-O-myristoylglucosamine and acetate, the committed step in lipid A biosynthesis. This Methylobacillus flagellatus (strain ATCC 51484 / DSM 6875 / VKM B-1610 / KT) protein is UDP-3-O-acyl-N-acetylglucosamine deacetylase.